The primary structure comprises 350 residues: Spermidine/putrescine import ATP-binding protein PotA (350 aa).

Positions 6-236 (LELRNISKQY…PENLWTAQFI (231 aa)) constitute an ABC transporter domain. Position 38–45 (38–45 (GPSGCGKT)) interacts with ATP.

It belongs to the ABC transporter superfamily. Spermidine/putrescine importer (TC 3.A.1.11.1) family. In terms of assembly, the complex is composed of two ATP-binding proteins (PotA), two transmembrane proteins (PotB and PotC) and a solute-binding protein (PotD).

It localises to the cell membrane. The enzyme catalyses ATP + H2O + polyamine-[polyamine-binding protein]Side 1 = ADP + phosphate + polyamineSide 2 + [polyamine-binding protein]Side 1.. In terms of biological role, part of the ABC transporter complex PotABCD involved in spermidine/putrescine import. Responsible for energy coupling to the transport system. This is Spermidine/putrescine import ATP-binding protein PotA from Spiroplasma citri.